The chain runs to 162 residues: Interleukin-15 (162 aa).

Residues 1 to 29 (MRISKPHLRSISIQCYLCLLLNSHFLTEA) form the signal peptide. The propeptide occupies 30–48 (GIHVFILGCFSAGLPKTEA). Cystine bridges form between Cys-83-Cys-133 and Cys-90-Cys-136. Asn-127 is a glycosylation site (N-linked (GlcNAc...) asparagine).

This sequence belongs to the IL-15/IL-21 family. In terms of tissue distribution, most abundant in placenta and skeletal muscle. It is also detected in the heart, lung, liver and kidney. IL15-S21AA is preferentially expressed in tissues such as testis and thymus.

Its subcellular location is the secreted. It localises to the cytoplasm. It is found in the nucleus. In terms of biological role, cytokine that plays a major role in the development of inflammatory and protective immune responses to microbial invaders and parasites by modulating immune cells of both the innate and adaptive immune systems. Stimulates the proliferation of natural killer cells, T-cells and B-cells and promotes the secretion of several cytokines. In monocytes, induces the production of IL8 and monocyte chemotactic protein 1/CCL2, two chemokines that attract neutrophils and monocytes respectively to sites of infection. Unlike most cytokines, which are secreted in soluble form, IL15 is expressed in association with its high affinity IL15RA on the surface of IL15-producing cells and delivers signals to target cells that express IL2RB and IL2RG receptor subunits. Binding to its receptor triggers the phosphorylation of JAK1 and JAK3 and the recruitment and subsequent phosphorylation of signal transducer and activator of transcription-3/STAT3 and STAT5. In mast cells, induces the rapid tyrosine phosphorylation of STAT6 and thereby controls mast cell survival and release of cytokines such as IL4. This chain is Interleukin-15 (IL15), found in Homo sapiens (Human).